A 341-amino-acid polypeptide reads, in one-letter code: Heat-inducible transcription repressor HrcA (341 aa).

Belongs to the HrcA family.

In terms of biological role, negative regulator of class I heat shock genes (grpE-dnaK-dnaJ and groELS operons). Prevents heat-shock induction of these operons. This chain is Heat-inducible transcription repressor HrcA, found in Carboxydothermus hydrogenoformans (strain ATCC BAA-161 / DSM 6008 / Z-2901).